The sequence spans 652 residues: Large subunit GTPase 1 homolog (652 aa).

Ser-93 bears the Phosphoserine mark. The 275-residue stretch at 164 to 438 (WRQLWRVIER…LCDCPGLVMP (275 aa)) folds into the CP-type G domain. 212–215 (NKAD) lines the GTP pocket. Ser-252 is subject to Phosphoserine. The segment at 288–347 (LGEAASSEEDESEYEDCQEEEEDWQTCLEDSSSSDEEACGQDCKEGHTVDSEAQGRNTPQ) is disordered. The span at 293–311 (SSEEDESEYEDCQEEEEDW) shows a compositional bias: acidic residues. Residues 387 to 394 (GYPNVGKS) and 431 to 434 (DCPG) contribute to the GTP site. The segment at 625-652 (RGAGKPWKKHGNRNKKEKSRRLYKHLDM) is disordered. A compositionally biased stretch (basic residues) spans 630–652 (PWKKHGNRNKKEKSRRLYKHLDM).

Belongs to the TRAFAC class YlqF/YawG GTPase family. LSG1 subfamily.

It localises to the cytoplasm. It is found in the endoplasmic reticulum. The protein resides in the nucleus. The protein localises to the cajal body. It carries out the reaction GTP + H2O = GDP + phosphate + H(+). Functionally, functions as a GTPase. May act by mediating the release of NMD3 from the 60S ribosomal subunit after export into the cytoplasm during the 60S ribosomal subunit maturation. This Bos taurus (Bovine) protein is Large subunit GTPase 1 homolog.